We begin with the raw amino-acid sequence, 285 residues long: Protease HtpX homolog (285 aa).

2 helical membrane passes run 7–27 and 30–50; these read TAMLMAAITALFIVIGGMIGG and GMTIALLFALGMNFFSYWFSD. Zn(2+) is bound at residue His-131. The active site involves Glu-132. A Zn(2+)-binding site is contributed by His-135. Helical transmembrane passes span 146 to 166 and 177 to 197; these read ITATMAGAISALANFAMFFGG and IAGIAVALLAPIAGALIQMAI. Glu-202 provides a ligand contact to Zn(2+).

This sequence belongs to the peptidase M48B family. Requires Zn(2+) as cofactor.

It localises to the cell inner membrane. The polypeptide is Protease HtpX homolog (Burkholderia cenocepacia (strain HI2424)).